A 332-amino-acid polypeptide reads, in one-letter code: Centrosomal AT-AC splicing factor (332 aa).

Residues 1–169 form a required for centrosome location region; it reads MAPAQRCPLC…QSRQEVVRSV (169 aa). Residue lysine 31 is modified to N6-acetyllysine; by NAT10. Residues 137 to 168 are a coiled coil; the sequence is LDSYEEKEDKVIKEMAAQIREVEQSRQEVVRS. Positions 169 to 213 are disordered; that stretch reads VLEPQAVPDPEEGSSAPRSWKGMNSQVASSLQQPSNLDLPPAPEL. Over residues 190 to 204 the composition is skewed to polar residues; it reads GMNSQVASSLQQPSN.

As to quaternary structure, interacts with SASS6; the interaction increases with CENATAC acetylation. Acetylated. Acetylation oscillates throughout the cell cycle, and the acetylation state at Lys-31 is regulated by the deacetylase SIRT1 and the acetyltransferase NAT10. Deacetylated CENATAC is responsible for its centrosome targeting, and acetylated CENATAC promotes SASS6 degradation by enhancing the binding affinity of SASS6 for APC/C E3 ubiquitin-protein ligase complex/FZR1.

The protein localises to the cytoplasm. It localises to the cytoskeleton. The protein resides in the microtubule organizing center. Its subcellular location is the centrosome. Component of the minor spliceosome that promotes splicing of a specific, rare minor intron subtype. Negative regulator of centrosome duplication. Constrains centriole number by modulating the degradation of the centrosome-duplication-associated protein SASS6 in an acetylation-dependent manner. SIRT1 deacetylates CENATAC in G1 phase, allowing for SASS6 accumulation on the centrosome and subsequent procentriole assembly. The CENATAC acetylation level is restored in mitosis by NAT10, promoting SASS6 proteasome degradation by facilitating SASS6 binding to APC/C E3 ubiquitin-protein ligase complex/FZR1. In Homo sapiens (Human), this protein is Centrosomal AT-AC splicing factor.